The sequence spans 365 residues: Chaperone protein DnaJ (365 aa).

In terms of domain architecture, J spans Asp-5–Gly-71. The segment at Gly-128–Gln-206 adopts a CR-type zinc-finger fold. Zn(2+) is bound by residues Cys-141, Cys-144, Cys-158, Cys-161, Cys-180, Cys-183, Cys-194, and Cys-197. CXXCXGXG motif repeat units lie at residues Cys-141 to Gly-148, Cys-158 to Gly-165, Cys-180 to Gly-187, and Cys-194 to Gly-201.

This sequence belongs to the DnaJ family. As to quaternary structure, homodimer. Zn(2+) serves as cofactor.

It localises to the cytoplasm. Its function is as follows. Participates actively in the response to hyperosmotic and heat shock by preventing the aggregation of stress-denatured proteins and by disaggregating proteins, also in an autonomous, DnaK-independent fashion. Unfolded proteins bind initially to DnaJ; upon interaction with the DnaJ-bound protein, DnaK hydrolyzes its bound ATP, resulting in the formation of a stable complex. GrpE releases ADP from DnaK; ATP binding to DnaK triggers the release of the substrate protein, thus completing the reaction cycle. Several rounds of ATP-dependent interactions between DnaJ, DnaK and GrpE are required for fully efficient folding. Also involved, together with DnaK and GrpE, in the DNA replication of plasmids through activation of initiation proteins. This chain is Chaperone protein DnaJ, found in Vesicomyosocius okutanii subsp. Calyptogena okutanii (strain HA).